Consider the following 727-residue polypeptide: NHL repeat-containing protein 2 (727 aa).

Positions 43 to 198 (RERDLTVPEL…TLKFYKERGQ (156 aa)) constitute a Thioredoxin domain. NHL repeat units lie at residues 207–249 (KLYK…TLKN), 260–302 (NSGR…IDLE), 330–364 (ISSPWDVVFGNSVSGTQEDDVLWIAMAGIHQVWAL), 404–434 (FAQPSGLSLASEEPWNCLFVADSESSTVRMI), 456–500 (AFGD…VDPK), and 513–557 (ASNV…LDLE).

As to quaternary structure, monomer.

It is found in the cytoplasm. It localises to the cytosol. Functionally, required for normal embryonic development. In Gallus gallus (Chicken), this protein is NHL repeat-containing protein 2 (NHLRC2).